The following is a 512-amino-acid chain: ATP synthase subunit alpha (512 aa).

An ATP-binding site is contributed by 169-176 (GDRQTGKT).

Belongs to the ATPase alpha/beta chains family. In terms of assembly, F-type ATPases have 2 components, CF(1) - the catalytic core - and CF(0) - the membrane proton channel. CF(1) has five subunits: alpha(3), beta(3), gamma(1), delta(1), epsilon(1). CF(0) has three main subunits: a(1), b(2) and c(9-12). The alpha and beta chains form an alternating ring which encloses part of the gamma chain. CF(1) is attached to CF(0) by a central stalk formed by the gamma and epsilon chains, while a peripheral stalk is formed by the delta and b chains.

It is found in the cell membrane. The enzyme catalyses ATP + H2O + 4 H(+)(in) = ADP + phosphate + 5 H(+)(out). Functionally, produces ATP from ADP in the presence of a proton gradient across the membrane. The alpha chain is a regulatory subunit. In Buchnera aphidicola subsp. Acyrthosiphon pisum (strain Tuc7), this protein is ATP synthase subunit alpha.